The following is a 386-amino-acid chain: Tubulin beta-1 chain (386 aa).

Positions 7, 76, 80, 81, 82, 142, and 164 each coordinate GTP. Glu-7 provides a ligand contact to Mg(2+). The tract at residues 363-386 is disordered; that stretch reads YQDATADEEGEYEDEEEDLQAEDM. A compositionally biased stretch (acidic residues) spans 367–386; sequence TADEEGEYEDEEEDLQAEDM.

It belongs to the tubulin family. In terms of assembly, dimer of alpha and beta chains. A typical microtubule is a hollow water-filled tube with an outer diameter of 25 nm and an inner diameter of 15 nM. Alpha-beta heterodimers associate head-to-tail to form protofilaments running lengthwise along the microtubule wall with the beta-tubulin subunit facing the microtubule plus end conferring a structural polarity. Microtubules usually have 13 protofilaments but different protofilament numbers can be found in some organisms and specialized cells. Mg(2+) is required as a cofactor.

The protein localises to the cytoplasm. Its subcellular location is the cytoskeleton. Its function is as follows. Tubulin is the major constituent of microtubules, a cylinder consisting of laterally associated linear protofilaments composed of alpha- and beta-tubulin heterodimers. Microtubules grow by the addition of GTP-tubulin dimers to the microtubule end, where a stabilizing cap forms. Below the cap, tubulin dimers are in GDP-bound state, owing to GTPase activity of alpha-tubulin. This chain is Tubulin beta-1 chain (TUBB1), found in Avena sativa (Oat).